Consider the following 389-residue polypeptide: Serpin-Z3 (389 aa).

An RCL region spans residues 337–361 (GTEAAAVSVAIMMPQCLMRNPDFVA).

This sequence belongs to the serpin family.

Functionally, probable serine protease inhibitor. This Arabidopsis thaliana (Mouse-ear cress) protein is Serpin-Z3.